Here is a 393-residue protein sequence, read N- to C-terminus: PGA synthase CapB (393 aa).

The cofactor is Mn(2+).

Its function is as follows. Catalyzes the biosynthesis of PGA (gamma-polyglutamic acid) from L-glutamate. Both the 44-kDa and the 33-kDa forms are required for PGA synthesis. The polypeptide is PGA synthase CapB (capB) (Bacillus subtilis (strain 168)).